A 305-amino-acid polypeptide reads, in one-letter code: Protoheme IX farnesyltransferase (305 aa).

The next 9 helical transmembrane spans lie at 31–51 (VMSLVMFTGFVGMWLAPYSVH), 52–72 (PFIAVIVLACISLGAGSAGAI), 102–119 (ALSFGLITGFFAVFFMAL), 123–145 (LLASFLLLFTIFYYICIYTIWLK), 151–171 (NIVIGGVSGALPPVIGYAAVS), 179–199 (IILFLIIFIWTPPHSWALALF), 218–238 (ILYTKEQILIYSILLFLVSLM), 240–260 (FFIGMNNFIYLIIAGMLGLVF), and 281–301 (FAYSIFYLFFIFLLLSSTSTI).

It belongs to the UbiA prenyltransferase family. Protoheme IX farnesyltransferase subfamily.

It localises to the cell inner membrane. The enzyme catalyses heme b + (2E,6E)-farnesyl diphosphate + H2O = Fe(II)-heme o + diphosphate. It participates in porphyrin-containing compound metabolism; heme O biosynthesis; heme O from protoheme: step 1/1. Its function is as follows. Converts heme B (protoheme IX) to heme O by substitution of the vinyl group on carbon 2 of heme B porphyrin ring with a hydroxyethyl farnesyl side group. This chain is Protoheme IX farnesyltransferase, found in Rickettsia akari (strain Hartford).